The sequence spans 177 residues: Probable inosine/xanthosine triphosphatase (177 aa).

This sequence belongs to the YjjX NTPase family. As to quaternary structure, homodimer. Mg(2+) is required as a cofactor. It depends on Mn(2+) as a cofactor.

The catalysed reaction is XTP + H2O = XDP + phosphate + H(+). It catalyses the reaction ITP + H2O = IDP + phosphate + H(+). Phosphatase that hydrolyzes non-canonical purine nucleotides such as XTP and ITP to their respective diphosphate derivatives. Probably excludes non-canonical purines from DNA/RNA precursor pool, thus preventing their incorporation into DNA/RNA and avoiding chromosomal lesions. This is Probable inosine/xanthosine triphosphatase from Halalkalibacterium halodurans (strain ATCC BAA-125 / DSM 18197 / FERM 7344 / JCM 9153 / C-125) (Bacillus halodurans).